The primary structure comprises 291 residues: Pituitary-specific positive transcription factor 1 (291 aa).

Residues 5–13 carry the 9aaTAD motif; sequence AFTSADTFI. One can recognise a POU-specific domain in the interval 124–198; that stretch reads MDSPEIRELE…ILSKWLEEAE (75 aa). The homeobox DNA-binding region spans 214 to 273; sequence KRKRRTTISIAAKDALERHFGEQNKPSSQEIMRMAEELNLEKEVVRVWFCNRRQREKRVK.

The protein belongs to the POU transcription factor family. Class-1 subfamily. Interacts with PITX1. Interacts with LHX3. Interacts with ELK1.

It localises to the nucleus. Its function is as follows. Transcription factor involved in the specification of the lactotrope, somatotrope, and thyrotrope phenotypes in the developing anterior pituitary. Activates growth hormone and prolactin genes. Specifically binds to the consensus sequence 5'-TAAAT-3'. This Macaca mulatta (Rhesus macaque) protein is Pituitary-specific positive transcription factor 1 (POU1F1).